Here is a 340-residue protein sequence, read N- to C-terminus: UDP-3-O-(3-hydroxymyristoyl)glucosamine N-acyltransferase (340 aa).

Catalysis depends on His239, which acts as the Proton acceptor.

It belongs to the transferase hexapeptide repeat family. LpxD subfamily. Homotrimer.

It carries out the reaction a UDP-3-O-[(3R)-3-hydroxyacyl]-alpha-D-glucosamine + a (3R)-hydroxyacyl-[ACP] = a UDP-2-N,3-O-bis[(3R)-3-hydroxyacyl]-alpha-D-glucosamine + holo-[ACP] + H(+). The enzyme catalyses UDP-3-O-[(3R)-3-hydroxytetradecanoyl]-alpha-D-glucosamine + (3R)-hydroxytetradecanoyl-[ACP] = UDP-2-N,3-O-bis[(3R)-3-hydroxytetradecanoyl]-alpha-D-glucosamine + holo-[ACP] + H(+). It participates in glycolipid biosynthesis; lipid IV(A) biosynthesis; lipid IV(A) from (3R)-3-hydroxytetradecanoyl-[acyl-carrier-protein] and UDP-N-acetyl-alpha-D-glucosamine: step 3/6. Its function is as follows. Catalyzes the N-acylation of UDP-3-O-(hydroxytetradecanoyl)glucosamine using 3-hydroxytetradecanoyl-ACP as the acyl donor. Is involved in the biosynthesis of lipid A, a phosphorylated glycolipid that anchors the lipopolysaccharide to the outer membrane of the cell. This is UDP-3-O-(3-hydroxymyristoyl)glucosamine N-acyltransferase from Pectobacterium atrosepticum (strain SCRI 1043 / ATCC BAA-672) (Erwinia carotovora subsp. atroseptica).